The following is a 162-amino-acid chain: Caveolin-2 (162 aa).

Over 1–86 (MGLETEKADV…FEISKYVMYK (86 aa)) the chain is Cytoplasmic. Tyr-19 bears the Phosphotyrosine; by SRC mark. 2 positions are modified to phosphoserine: Ser-20 and Ser-23. Tyr-27 carries the phosphotyrosine; by SRC modification. The residue at position 36 (Ser-36) is a Phosphoserine. Residues 87–107 (FLTVFLAIPLAFIAGILFATL) constitute an intramembrane region (helical). At 108–162 (SCLHIWILMPFVKTCLMVLPSVQTIWKSVTDVIIAPLCTSVGRSFSSVSLQLSQD) the chain is on the cytoplasmic side.

It belongs to the caveolin family. In terms of assembly, monomer or homodimer. Interacts with CAV1; the interaction forms a stable heterooligomeric complex that is required for targeting to lipid rafts and for caveolae formation. Tyrosine phosphorylated forms do not form heterooligomers with the Tyr-19-phosphorylated form existing as a monomer or dimer, and the Tyr-27-form as a monomer only. Interacts (tyrosine phosphorylated form) with the SH2 domain-containing proteins, RASA1, NCK1 and SRC. Interacts (tyrosine phosphorylated form) with INSR, the interaction (Tyr-27-phosphorylated form) is increased on insulin stimulation. Interacts (Tyr-19 phosphorylated form) with MAPK1 (phosphorylated form); the interaction, promoted by insulin, leads to nuclear location and MAPK1 activation. Interacts with STAT3; the interaction is increased on insulin-induced tyrosine phosphorylation leading to STAT activation. Phosphorylated on serine and tyrosine residues. CAV1 promotes phosphorylation on Ser-23 which then targets the complex to the plasma membrane, lipid rafts and caveolae. Phosphorylation on Ser-36 appears to modulate mitosis in endothelial cells. Phosphorylation on both Tyr-19 and Tyr-27 is required for insulin-induced 'Ser-727' phosphorylation of STAT3 and its activation. Phosphorylation on Tyr-19 is required for insulin-induced phosphorylation of MAPK1 and DNA binding of STAT3. Tyrosine phosphorylation is induced by both EGF and insulin (By. similarity).

The protein localises to the nucleus. It localises to the cytoplasm. It is found in the golgi apparatus membrane. The protein resides in the cell membrane. Its subcellular location is the membrane. The protein localises to the caveola. In terms of biological role, may act as a scaffolding protein within caveolar membranes. Interacts directly with G-protein alpha subunits and can functionally regulate their activity. Acts as an accessory protein in conjunction with CAV1 in targeting to lipid rafts and driving caveolae formation. The Ser-36 phosphorylated form has a role in modulating mitosis in endothelial cells. Positive regulator of cellular mitogenesis of the MAPK signaling pathway. Required for the insulin-stimulated nuclear translocation and activation of MAPK1 and STAT3, and the subsequent regulation of cell cycle progression. The chain is Caveolin-2 (CAV2) from Pongo abelii (Sumatran orangutan).